Here is a 260-residue protein sequence, read N- to C-terminus: Exosome complex component Rrp42 (260 aa).

This sequence belongs to the RNase PH family. Rrp42 subfamily. Component of the archaeal exosome complex. Forms a hexameric ring-like arrangement composed of 3 Rrp41-Rrp42 heterodimers. The hexameric ring associates with a trimer of Rrp4 and/or Csl4 subunits.

The protein resides in the cytoplasm. In terms of biological role, non-catalytic component of the exosome, which is a complex involved in RNA degradation. Contributes to the structuring of the Rrp41 active site. The polypeptide is Exosome complex component Rrp42 (Thermoplasma volcanium (strain ATCC 51530 / DSM 4299 / JCM 9571 / NBRC 15438 / GSS1)).